The following is a 177-amino-acid chain: Probable chemoreceptor glutamine deamidase CheD (177 aa).

Belongs to the CheD family.

It catalyses the reaction L-glutaminyl-[protein] + H2O = L-glutamyl-[protein] + NH4(+). Its function is as follows. Probably deamidates glutamine residues to glutamate on methyl-accepting chemotaxis receptors (MCPs), playing an important role in chemotaxis. In Pseudomonas fluorescens (strain SBW25), this protein is Probable chemoreceptor glutamine deamidase CheD.